A 115-amino-acid chain; its full sequence is Promotilin (115 aa).

Positions 1–25 (MVSRKAVAALLVVHAPAMLASQTEA) are cleaved as a signal peptide. A disordered region spans residues 40-74 (EKERSKGQKKSLSVWQRSGEEGPVDPAEPIEEEGN).

This sequence belongs to the motilin family.

Its subcellular location is the secreted. Plays an important role in the regulation of interdigestive gastrointestinal motility and indirectly causes rhythmic contraction of duodenal and colonic smooth muscle. The protein is Promotilin (MLN) of Macaca mulatta (Rhesus macaque).